Reading from the N-terminus, the 348-residue chain is Holliday junction branch migration complex subunit RuvB (348 aa).

Positions 4–184 (ADRLIAASGR…FGIVQRLEFY (181 aa)) are large ATPase domain (RuvB-L). ATP is bound by residues Ile-23, Arg-24, Gly-65, Lys-68, Thr-69, Thr-70, 131 to 133 (EDF), Arg-174, Tyr-184, and Arg-221. Mg(2+) is bound at residue Thr-69. Residues 185–255 (NDKDLSTIVS…VADMALNLLD (71 aa)) form a small ATPAse domain (RuvB-S) region. The head domain (RuvB-H) stretch occupies residues 258 to 348 (ERGFDHSDRR…GGDFSEPGDE (91 aa)). Residues Arg-294, Arg-313, and Arg-318 each coordinate DNA.

Belongs to the RuvB family. As to quaternary structure, homohexamer. Forms an RuvA(8)-RuvB(12)-Holliday junction (HJ) complex. HJ DNA is sandwiched between 2 RuvA tetramers; dsDNA enters through RuvA and exits via RuvB. An RuvB hexamer assembles on each DNA strand where it exits the tetramer. Each RuvB hexamer is contacted by two RuvA subunits (via domain III) on 2 adjacent RuvB subunits; this complex drives branch migration. In the full resolvosome a probable DNA-RuvA(4)-RuvB(12)-RuvC(2) complex forms which resolves the HJ.

The protein localises to the cytoplasm. It carries out the reaction ATP + H2O = ADP + phosphate + H(+). Its function is as follows. The RuvA-RuvB-RuvC complex processes Holliday junction (HJ) DNA during genetic recombination and DNA repair, while the RuvA-RuvB complex plays an important role in the rescue of blocked DNA replication forks via replication fork reversal (RFR). RuvA specifically binds to HJ cruciform DNA, conferring on it an open structure. The RuvB hexamer acts as an ATP-dependent pump, pulling dsDNA into and through the RuvAB complex. RuvB forms 2 homohexamers on either side of HJ DNA bound by 1 or 2 RuvA tetramers; 4 subunits per hexamer contact DNA at a time. Coordinated motions by a converter formed by DNA-disengaged RuvB subunits stimulates ATP hydrolysis and nucleotide exchange. Immobilization of the converter enables RuvB to convert the ATP-contained energy into a lever motion, pulling 2 nucleotides of DNA out of the RuvA tetramer per ATP hydrolyzed, thus driving DNA branch migration. The RuvB motors rotate together with the DNA substrate, which together with the progressing nucleotide cycle form the mechanistic basis for DNA recombination by continuous HJ branch migration. Branch migration allows RuvC to scan DNA until it finds its consensus sequence, where it cleaves and resolves cruciform DNA. This is Holliday junction branch migration complex subunit RuvB from Pseudomonas putida (strain ATCC 47054 / DSM 6125 / CFBP 8728 / NCIMB 11950 / KT2440).